We begin with the raw amino-acid sequence, 400 residues long: Lysophospholipid transporter LplT (400 aa).

12 consecutive transmembrane segments (helical) span residues 19-39 (VIVA…ATLA), 53-73 (VLQM…GQIA), 91-111 (AGAA…LVGI), 139-159 (LMEA…GVLA), 164-184 (IAAL…NLFI), 195-213 (SWRL…VVLW), 227-247 (LFWG…PVAL), 257-277 (YLNA…AKLV), 281-301 (TVSR…IFSL), 304-324 (ALLP…FFVV), 352-372 (NSAM…GVPA), and 373-393 (VAIG…LWIW).

The protein belongs to the major facilitator superfamily. LplT (TC 2.A.1.42) family.

Its subcellular location is the cell inner membrane. Functionally, catalyzes the facilitated diffusion of 2-acyl-glycero-3-phosphoethanolamine (2-acyl-GPE) into the cell. The sequence is that of Lysophospholipid transporter LplT from Salmonella typhi.